The primary structure comprises 291 residues: Methionine aminopeptidase (291 aa).

His-118 lines the substrate pocket. A divalent metal cation-binding residues include Asp-135, Asp-146, and His-209. A substrate-binding site is contributed by His-216. A divalent metal cation is bound by residues Glu-241 and Glu-273.

Belongs to the peptidase M24A family. Methionine aminopeptidase type 1 subfamily. Monomer. Requires Co(2+) as cofactor. The cofactor is Zn(2+). It depends on Mn(2+) as a cofactor. Fe(2+) is required as a cofactor.

It catalyses the reaction Release of N-terminal amino acids, preferentially methionine, from peptides and arylamides.. Functionally, removes the N-terminal methionine from nascent proteins. The N-terminal methionine is often cleaved when the second residue in the primary sequence is small and uncharged (Met-Ala-, Cys, Gly, Pro, Ser, Thr, or Val). Requires deformylation of the N(alpha)-formylated initiator methionine before it can be hydrolyzed. This chain is Methionine aminopeptidase, found in Chlamydia trachomatis serovar D (strain ATCC VR-885 / DSM 19411 / UW-3/Cx).